The sequence spans 275 residues: Calcium uniporter protein, mitochondrial (275 aa).

The transit peptide at 1 to 28 (MNSFVIRNGFGLVRTFNTRLFTTSTQNL) directs the protein to the mitochondrion. The Mitochondrial matrix portion of the chain corresponds to 29–165 (EGELKTILGQ…DRKAHRRATA (137 aa)). Positions 125-157 (VGLNKLIESKKSEINSLRQKIQPLEEKKQVIDR) form a coiled coil. The chain crosses the membrane as a helical span at residues 166 to 186 (IIWTGLGYCFAQAAILARLTW). Over 187 to 192 (WDLSWD) the chain is Mitochondrial intermembrane. A Selectivity filter motif is present at residues 191–199 (WDIIEPVSY). Residues 193–213 (IIEPVSYFLTFGSVLIGYTYF) form a helical membrane-spanning segment. Glu195 provides a ligand contact to Ca(2+). At 214-275 (TMTKTEFTYE…ELATKYDHTH (62 aa)) the chain is on the mitochondrial matrix side. A coiled-coil region spans residues 244–270 (PKEDYENLVQAIDKKEKELKELELATK).

Belongs to the MCU (TC 1.A.77) family. As to quaternary structure, homooligomer.

The protein localises to the mitochondrion inner membrane. The catalysed reaction is Ca(2+)(in) = Ca(2+)(out). Its activity is regulated as follows. Inhibited by ruthenium red or its derivative Ru360. In terms of biological role, mitochondrial inner membrane calcium uniporter that mediates calcium uptake into mitochondria. Constitutes a pore-forming and calcium-conducting subunit. Mitochondrial calcium homeostasis plays key roles in cellular physiology and regulates cell bioenergetics, cytoplasmic calcium signals and activation of cell death pathways. Sufficient to operate as a pore-forming channel without the need of calcium-sensor or auxiliary subunit. In Dictyostelium discoideum (Social amoeba), this protein is Calcium uniporter protein, mitochondrial.